Reading from the N-terminus, the 1427-residue chain is MLLPSDVARLVLGYLQQENLISTCQTFILESSDLKEYAEHCTDEGFIPACLLSLFGKNLTTILNEYVAMKTKETSNNVPAIMSSLWKKLDHTLSQIRSMQSSPRFAGSQRARTRTGIAEIKRQRKLASQTAPASAELLTLPYLSGQFTTPPSTGTQVTRPSGQISDPSRSYFVVVNHSQSQDTVTTGEALNVIPGAQEKKAHASLMSPGRRKSESQRKSTTLSGPHSTIRNFQDPNAFAVEKQMVIENAREKILSNKSLQEKLAENINKFLTSDNNIAQVPKQTDNNPTEPETSIDEFLGLPSEIHMSEEAIQDILEQTESDPAFQALFDLFDYGKTKNNKNISQSISSQPMESNPSIVLADETNLAVKGSFETEESDGQSGQPAFCTSYQNDDPLNALKNSNNHDVLRQEDQENFSQISTSIQKKAFKTAVPTEQKCDIDITFESVPNLNDFNQRGNSNAECNPHCAELYTNQMSTETEMAIGIEKNSLSSNVPSESQLQPDQPDIPITSFVSLGCEANNENLILSGKSSQLLSQDTSLTGKPSKKSQFCENSNDTVKLKINFHGSKSSDSSEVHKSKIEINVLEPVMSQLSNCQDNSCLQSEILPVSVESSHLNVSGQVEIHLGDSLSSTKQPSNDSASVELNHTENEAQASKSENSQEPSSSVKEENTIFLSLGGNANCEKVALTPPEGTPVENSHSLPPESVCSSVGDSHPESQNTDDKPSSNNSAEIDASNIVSLKVIISDDPFVSSDTELTSAVSSINGENLPTIILSSPTKSPTKNAELVKCLSSEETVGAVVYAEVGDSASMEQSLLTFKSEDSAVNNTQNEDGIAFSANVTPCVSKDGGYIQLMPATSTAFGNSNNILIATCVTDPTALGTSVSQSNVVVLPGNSAPMTAQPLPPQLQTPPRSNSVFAVNQAVSPNFSQGSAIIIASPVQPVLQGMVGMIPVSVVGQNGNNFSTPPRQVLHMPLTAPVCNRSIPQFPVPPKSQKAQGLRNKPCIGKQVNNLVDSSGHSVGCHAQKTEVSDKSIATDLGKKSEETTVPFPEESIVPAAKPCHRRVLCFDSTTAPVANTQGPNHKMVSQNKERNAVSFPNLDSPNVSSTLKPPSNNAIKREKEKPPLPKILSKSESAISRHTTIRETQSEKKVSPTEIVLESFHKATANKENELCSDVERQKNPENSKLSIGQQNGGLRSEKSIASLQEMTKKQGTSSNNKNVLSVGTAVKDLKQEQTKSASSLITTEMLQDIQRHSSVSRLADSSDLPVPRTPGSGAGEKHKEEPIDIIKAPSSRRFSEDSSTSKVMVPPVTPDLPACSPASETGSENSVNMAAHTLMILSRAAISRTTSATPLKDNTQQFRASSRSTTKKRKIEELDERERNSRPSSKNLTNSSIPMKKKKIKKKKLPSSFPAGMDVDKFLLSLHYDE.

Positions 1-318 (MLLPSDVARL…EEAIQDILEQ (318 aa)) are interaction with MIZF. A LisH domain is found at 3–35 (LPSDVARLVLGYLQQENLISTCQTFILESSDLK). Required for activation of histone gene transcription and interaction with MIZF regions lie at residues 5-25 (SDVA…STCQ) and 121-145 (KRQR…YLSG). The disordered stretch occupies residues 199-231 (KKAHASLMSPGRRKSESQRKSTTLSGPHSTIRN). The residue at position 207 (Ser207) is a Phosphoserine. The span at 218 to 231 (KSTTLSGPHSTIRN) shows a compositional bias: polar residues. The mediates transcriptional activation stretch occupies residues 262-338 (KLAENINKFL…FDLFDYGKTK (77 aa)). A phosphoserine mark is found at Ser554 and Ser599. The segment covering 628 to 644 (SLSSTKQPSNDSASVEL) has biased composition (polar residues). Disordered regions lie at residues 628 to 669 (SLSS…VKEE) and 683 to 732 (EKVA…SAEI). Positions 629-653 (LSSTKQPSNDSASVELNHTENEAQA) are required for acceleration of G1 phase. The span at 654-665 (SKSENSQEPSSS) shows a compositional bias: low complexity. Residues 695 to 711 (VENSHSLPPESVCSSVG) are compositionally biased toward polar residues. Phosphoserine; by CDK2 occurs at positions 775 and 779. 2 required for acceleration of G1 phase regions span residues 828–853 (QNED…IQLM) and 1039–1054 (KSEE…SIVP). Disordered regions lie at residues 1095-1121 (FPNL…EKEK) and 1133-1152 (SAIS…KVSP). A compositionally biased stretch (polar residues) spans 1097–1114 (NLDSPNVSSTLKPPSNNA). Position 1100 is a phosphoserine; by CDK2 (Ser1100). Glycyl lysine isopeptide (Lys-Gly) (interchain with G-Cter in SUMO2) cross-links involve residues Lys1116 and Lys1149. A compositionally biased stretch (basic and acidic residues) spans 1140–1151 (TIRETQSEKKVS). 2 positions are modified to phosphoserine: Ser1151 and Ser1200. The residue at position 1228 (Lys1228) is an N6-acetyllysine. The tract at residues 1228–1252 (KDLKQEQTKSASSLITTEMLQDIQR) is required for acceleration of G1 phase. 2 disordered regions span residues 1253–1327 (HSSV…SENS) and 1348–1413 (SATP…FPAG). At Ser1254 the chain carries Phosphoserine. Thr1270 carries the post-translational modification Phosphothreonine; by CDK2. Residues 1276 to 1285 (GEKHKEEPID) show a composition bias toward basic and acidic residues. A Glycyl lysine isopeptide (Lys-Gly) (interchain with G-Cter in SUMO2) cross-link involves residue Lys1280. A required for acceleration of G1 phase region spans residues 1325-1349 (ENSVNMAAHTLMILSRAAISRTTSA). The segment covering 1348–1365 (SATPLKDNTQQFRASSRS) has biased composition (polar residues). Thr1350 carries the phosphothreonine; by CDK2 modification. Over residues 1371–1382 (KIEELDERERNS) the composition is skewed to basic and acidic residues. Positions 1383–1394 (RPSSKNLTNSSI) are enriched in polar residues. Over residues 1396 to 1406 (MKKKKIKKKKL) the composition is skewed to basic residues.

The protein belongs to the NPAT family. As to quaternary structure, interacts with the cylin/CDK complexes CCNE1/CDK2 and CCNA1/CDK2. Interacts with BZW1, CASP8AP2, CREBBP, MIZF and YY1. Interacts with the RUVBL1, RUVBL2 and TRRAP subunits of the NuA4 complex. May also interact with GAPDH, NME1, NME2 and STIP1. Phosphorylated at Ser-775, Ser-779, Ser-1100, Thr-1270 and Thr-1350 by CCNE1/CDK2 at G1-S transition and until prophase, which promotes association with histone gene clusters and stimulates activation of histone transcription. Also phosphorylated by CCNA1/CDK2 in vitro. As to expression, ubiquitously expressed.

The protein localises to the nucleus. The protein resides in the cajal body. Its function is as follows. Required for progression through the G1 and S phases of the cell cycle and for S phase entry. Activates transcription of the histone H2A, histone H2B, histone H3 and histone H4 genes in conjunction with MIZF. Also positively regulates the ATM, MIZF and PRKDC promoters. Transcriptional activation may be accomplished at least in part by the recruitment of the NuA4 histone acetyltransferase (HAT) complex to target gene promoters. The polypeptide is Protein NPAT (NPAT) (Homo sapiens (Human)).